Consider the following 346-residue polypeptide: Biotin synthase (346 aa).

The Radical SAM core domain occupies 40 to 264 (NEVQVSTLLS…MMPHSHVRLS (225 aa)). [4Fe-4S] cluster contacts are provided by Cys55, Cys59, and Cys62. The [2Fe-2S] cluster site is built by Cys99, Cys130, Cys190, and Arg262.

This sequence belongs to the radical SAM superfamily. Biotin synthase family. As to quaternary structure, homodimer. [4Fe-4S] cluster serves as cofactor. [2Fe-2S] cluster is required as a cofactor.

It carries out the reaction (4R,5S)-dethiobiotin + (sulfur carrier)-SH + 2 reduced [2Fe-2S]-[ferredoxin] + 2 S-adenosyl-L-methionine = (sulfur carrier)-H + biotin + 2 5'-deoxyadenosine + 2 L-methionine + 2 oxidized [2Fe-2S]-[ferredoxin]. Its pathway is cofactor biosynthesis; biotin biosynthesis; biotin from 7,8-diaminononanoate: step 2/2. Functionally, catalyzes the conversion of dethiobiotin (DTB) to biotin by the insertion of a sulfur atom into dethiobiotin via a radical-based mechanism. In Colwellia psychrerythraea (strain 34H / ATCC BAA-681) (Vibrio psychroerythus), this protein is Biotin synthase.